Consider the following 340-residue polypeptide: Ketol-acid reductoisomerase (NADP(+)) (340 aa).

Positions 3 to 182 (VQMEYEKDVK…GAARVGLLET (180 aa)) constitute a KARI N-terminal Rossmann domain. Residues 26 to 29 (YGSQ), R49, S53, and 83 to 86 (DEIQ) contribute to the NADP(+) site. H108 is a catalytic residue. G134 provides a ligand contact to NADP(+). In terms of domain architecture, KARI C-terminal knotted spans 183-328 (TYKEETEEDL…AELRKAMPFV (146 aa)). Residues D191, E195, E227, and E231 each contribute to the Mg(2+) site. S252 provides a ligand contact to substrate.

This sequence belongs to the ketol-acid reductoisomerase family. Mg(2+) is required as a cofactor.

It catalyses the reaction (2R)-2,3-dihydroxy-3-methylbutanoate + NADP(+) = (2S)-2-acetolactate + NADPH + H(+). The catalysed reaction is (2R,3R)-2,3-dihydroxy-3-methylpentanoate + NADP(+) = (S)-2-ethyl-2-hydroxy-3-oxobutanoate + NADPH + H(+). It participates in amino-acid biosynthesis; L-isoleucine biosynthesis; L-isoleucine from 2-oxobutanoate: step 2/4. Its pathway is amino-acid biosynthesis; L-valine biosynthesis; L-valine from pyruvate: step 2/4. Involved in the biosynthesis of branched-chain amino acids (BCAA). Catalyzes an alkyl-migration followed by a ketol-acid reduction of (S)-2-acetolactate (S2AL) to yield (R)-2,3-dihydroxy-isovalerate. In the isomerase reaction, S2AL is rearranged via a Mg-dependent methyl migration to produce 3-hydroxy-3-methyl-2-ketobutyrate (HMKB). In the reductase reaction, this 2-ketoacid undergoes a metal-dependent reduction by NADPH to yield (R)-2,3-dihydroxy-isovalerate. The sequence is that of Ketol-acid reductoisomerase (NADP(+)) from Streptococcus pneumoniae (strain Hungary19A-6).